A 176-amino-acid chain; its full sequence is Crossover junction endodeoxyribonuclease RuvC (176 aa).

Catalysis depends on residues aspartate 8, glutamate 69, and aspartate 141. Residues aspartate 8, glutamate 69, and aspartate 141 each contribute to the Mg(2+) site.

It belongs to the RuvC family. In terms of assembly, homodimer which binds Holliday junction (HJ) DNA. The HJ becomes 2-fold symmetrical on binding to RuvC with unstacked arms; it has a different conformation from HJ DNA in complex with RuvA. In the full resolvosome a probable DNA-RuvA(4)-RuvB(12)-RuvC(2) complex forms which resolves the HJ. The cofactor is Mg(2+).

Its subcellular location is the cytoplasm. The catalysed reaction is Endonucleolytic cleavage at a junction such as a reciprocal single-stranded crossover between two homologous DNA duplexes (Holliday junction).. Its function is as follows. The RuvA-RuvB-RuvC complex processes Holliday junction (HJ) DNA during genetic recombination and DNA repair. Endonuclease that resolves HJ intermediates. Cleaves cruciform DNA by making single-stranded nicks across the HJ at symmetrical positions within the homologous arms, yielding a 5'-phosphate and a 3'-hydroxyl group; requires a central core of homology in the junction. The consensus cleavage sequence is 5'-(A/T)TT(C/G)-3'. Cleavage occurs on the 3'-side of the TT dinucleotide at the point of strand exchange. HJ branch migration catalyzed by RuvA-RuvB allows RuvC to scan DNA until it finds its consensus sequence, where it cleaves and resolves the cruciform DNA. The protein is Crossover junction endodeoxyribonuclease RuvC of Pseudomonas syringae pv. tomato (strain ATCC BAA-871 / DC3000).